Consider the following 360-residue polypeptide: S-adenosylmethionine:tRNA ribosyltransferase-isomerase (360 aa).

It belongs to the QueA family. As to quaternary structure, monomer.

Its subcellular location is the cytoplasm. The enzyme catalyses 7-aminomethyl-7-carbaguanosine(34) in tRNA + S-adenosyl-L-methionine = epoxyqueuosine(34) in tRNA + adenine + L-methionine + 2 H(+). Its pathway is tRNA modification; tRNA-queuosine biosynthesis. Transfers and isomerizes the ribose moiety from AdoMet to the 7-aminomethyl group of 7-deazaguanine (preQ1-tRNA) to give epoxyqueuosine (oQ-tRNA). This chain is S-adenosylmethionine:tRNA ribosyltransferase-isomerase, found in Rhodopseudomonas palustris (strain BisB5).